The chain runs to 459 residues: UDP-N-acetylmuramoylalanine--D-glutamate ligase (459 aa).

Residue 120–126 (GSNGKTT) participates in ATP binding.

This sequence belongs to the MurCDEF family.

The protein localises to the cytoplasm. The catalysed reaction is UDP-N-acetyl-alpha-D-muramoyl-L-alanine + D-glutamate + ATP = UDP-N-acetyl-alpha-D-muramoyl-L-alanyl-D-glutamate + ADP + phosphate + H(+). Its pathway is cell wall biogenesis; peptidoglycan biosynthesis. Functionally, cell wall formation. Catalyzes the addition of glutamate to the nucleotide precursor UDP-N-acetylmuramoyl-L-alanine (UMA). This chain is UDP-N-acetylmuramoylalanine--D-glutamate ligase, found in Lactobacillus acidophilus (strain ATCC 700396 / NCK56 / N2 / NCFM).